Consider the following 302-residue polypeptide: Tetrahydromethanopterin S-methyltransferase subunit E (302 aa).

The next 6 membrane-spanning stretches (helical) occupy residues 3–23 (PLISMGVLALIGVAATIAGAS), 86–106 (PLFALVFGSLIAACVHATFAV), 132–152 (ITPIMGYAFITTFCILVVSYL), 155–175 (VVLGHPFPLTMLAFIWGITIG), 233–253 (PVTGLAFGMTVFLGSWITTIF), and 259–279 (LGWLSVIAGIVIVFILIIWNW).

The protein belongs to the MtrE family. As to quaternary structure, the complex is composed of 8 subunits; MtrA, MtrB, MtrC, MtrD, MtrE, MtrF, MtrG and MtrH.

The protein resides in the cell membrane. The enzyme catalyses 5-methyl-5,6,7,8-tetrahydromethanopterin + coenzyme M + 2 Na(+)(in) = 5,6,7,8-tetrahydromethanopterin + methyl-coenzyme M + 2 Na(+)(out). It functions in the pathway one-carbon metabolism; methanogenesis from CO(2); methyl-coenzyme M from 5,10-methylene-5,6,7,8-tetrahydromethanopterin: step 2/2. Functionally, part of a complex that catalyzes the formation of methyl-coenzyme M and tetrahydromethanopterin from coenzyme M and methyl-tetrahydromethanopterin. This is an energy-conserving, sodium-ion translocating step. This chain is Tetrahydromethanopterin S-methyltransferase subunit E, found in Methanosarcina barkeri (strain Fusaro / DSM 804).